Consider the following 208-residue polypeptide: Thymidylate kinase (208 aa).

10–17 (GPEGSGKT) serves as a coordination point for ATP.

It belongs to the thymidylate kinase family.

It catalyses the reaction dTMP + ATP = dTDP + ADP. Functionally, phosphorylation of dTMP to form dTDP in both de novo and salvage pathways of dTTP synthesis. The polypeptide is Thymidylate kinase (Bacillus anthracis).